The primary structure comprises 272 residues: MKKYLLGIGLILALIACKQNVSSLDEKNSVSVDVPGGMKVLVSKEKNKDGKYDLMATVDNVDLKGTSDKNNGSGILEGVKADKSKVKLTVADDLSKTTLEVLKEDGTVVSRKVTSKDKSTTEAKFNEKGELSEKTMTRANGTTLEYSQMTNEDNAAKAVETLKNGIKFEGNLASGKTAVEIKEGTVTLKREIDKNGKVTVSLNDTASGSKKTASWQESTSTLTISANSKKTKDLVFLTNGTITVQNYDSAGTKLEGSAAEIKKLDELKNALR.

The first 16 residues, 1–16 (MKKYLLGIGLILALIA), serve as a signal peptide directing secretion. A lipid anchor (N-palmitoyl cysteine) is attached at C17. Residue C17 is the site of S-diacylglycerol cysteine attachment.

This sequence belongs to the OspA lipoprotein family.

Its subcellular location is the cell outer membrane. The protein resides in the cell surface. The polypeptide is Outer surface protein A (Borreliella burgdorferi (Lyme disease spirochete)).